A 306-amino-acid polypeptide reads, in one-letter code: Replication termination factor 2 (306 aa).

Residues 192-306 are disordered; the sequence is RAKLEKKTKK…HWVTHTSYCF (115 aa). Residues 226 to 240 are compositionally biased toward basic and acidic residues; the sequence is GKSEEADPDPREKKS. Serine 287 is modified (phosphoserine).

This sequence belongs to the rtf2 family. Interacts with DDI2; probably also interacts with DDI1. In terms of processing, undergoes proteasomal degradation, via DDI1 and DDI2. Removal from stalled replisomes and degradation are required for genome stability.

It is found in the chromosome. Functionally, replication termination factor which is a component of the elongating replisome. Required for ATR pathway signaling upon DNA damage and has a positive activity during DNA replication. Might function to facilitate fork pausing at replication fork barriers like the rDNA. May be globally required to stimulate ATR signaling after the fork stalls or encounters a lesion. Interacts with nascent DNA. The polypeptide is Replication termination factor 2 (Rattus norvegicus (Rat)).